Here is a 369-residue protein sequence, read N- to C-terminus: sn-glycerol-3-phosphate import ATP-binding protein UgpC 1 (369 aa).

Residues 4–234 (ISIRGVKKNY…PVSRFVAGFV (231 aa)) form the ABC transporter domain. Position 36–43 (36–43 (GPSGCGKS)) interacts with ATP.

It belongs to the ABC transporter superfamily. sn-glycerol-3-phosphate importer (TC 3.A.1.1.3) family. The complex is composed of two ATP-binding proteins (UgpC), two transmembrane proteins (UgpA and UgpE) and a solute-binding protein (UgpB).

The protein localises to the cell inner membrane. The enzyme catalyses sn-glycerol 3-phosphate(out) + ATP + H2O = sn-glycerol 3-phosphate(in) + ADP + phosphate + H(+). Functionally, part of the ABC transporter complex UgpBAEC involved in sn-glycerol-3-phosphate (G3P) import. Responsible for energy coupling to the transport system. The sequence is that of sn-glycerol-3-phosphate import ATP-binding protein UgpC 1 from Rhizobium johnstonii (strain DSM 114642 / LMG 32736 / 3841) (Rhizobium leguminosarum bv. viciae).